The sequence spans 96 residues: MANFVLKAEKREDLGTGASRRLRRAGKIPAVIYGGEKEAVSVLLDHDKVLHSTEDKAFFSSEITLDIDGKQEKVIIKALQRHPYKVKLIHADFMRV.

Belongs to the bacterial ribosomal protein bL25 family. As to quaternary structure, part of the 50S ribosomal subunit; part of the 5S rRNA/L5/L18/L25 subcomplex. Contacts the 5S rRNA. Binds to the 5S rRNA independently of L5 and L18.

In terms of biological role, this is one of the proteins that binds to the 5S RNA in the ribosome where it forms part of the central protuberance. The chain is Large ribosomal subunit protein bL25 from Francisella tularensis subsp. tularensis (strain FSC 198).